A 311-amino-acid polypeptide reads, in one-letter code: Transcriptional regulatory protein MoaR1 (311 aa).

The ompR/PhoB-type DNA-binding region spans 15–117 (LNATTAGAVQ…SEPPGYRLLI (103 aa)).

Belongs to the AfsR/DnrI/RedD regulatory family.

Its function is as follows. Acts as a positive transcriptional regulator of the molybdopterin biosynthesis moa1 locus, promoting the expression of the moaA1B1C1D1 genes. Binds directly to the moaA1 promoter. In Mycobacterium tuberculosis (strain ATCC 25618 / H37Rv), this protein is Transcriptional regulatory protein MoaR1 (moaR1).